Here is a 378-residue protein sequence, read N- to C-terminus: Anhydro-N-acetylmuramic acid kinase (378 aa).

23–30 (GTSMDGAD) provides a ligand contact to ATP.

Belongs to the anhydro-N-acetylmuramic acid kinase family.

The catalysed reaction is 1,6-anhydro-N-acetyl-beta-muramate + ATP + H2O = N-acetyl-D-muramate 6-phosphate + ADP + H(+). It functions in the pathway amino-sugar metabolism; 1,6-anhydro-N-acetylmuramate degradation. Its pathway is cell wall biogenesis; peptidoglycan recycling. In terms of biological role, catalyzes the specific phosphorylation of 1,6-anhydro-N-acetylmuramic acid (anhMurNAc) with the simultaneous cleavage of the 1,6-anhydro ring, generating MurNAc-6-P. Is required for the utilization of anhMurNAc either imported from the medium or derived from its own cell wall murein, and thus plays a role in cell wall recycling. This chain is Anhydro-N-acetylmuramic acid kinase, found in Bordetella pertussis (strain Tohama I / ATCC BAA-589 / NCTC 13251).